A 138-amino-acid polypeptide reads, in one-letter code: Vesicle transport protein GOT1B (138 aa).

Position 1 is an N-acetylmethionine (Met1). The Cytoplasmic segment spans residues Met1 to Lys9. A helical transmembrane segment spans residues Ile10–Phe30. Residues Asp31–Lys32 lie on the Lumenal side of the membrane. The chain crosses the membrane as a helical span at residues Ala33–Glu53. At Arg54–Thr68 the chain is on the cytoplasmic side. Glu90 is a topological domain (lumenal). Residues Ile91–Ile109 form a helical membrane-spanning segment. Residues Arg110–Val138 are Cytoplasmic-facing.

The protein belongs to the GOT1 family.

It localises to the golgi apparatus membrane. Its function is as follows. May be involved in fusion of ER-derived transport vesicles with the Golgi complex. The polypeptide is Vesicle transport protein GOT1B (Golt1b) (Mus musculus (Mouse)).